The chain runs to 146 residues: uncharacterized protein (146 aa).

A helical membrane pass occupies residues Ile6–Phe26.

The protein localises to the membrane. This is an uncharacterized protein from Caenorhabditis elegans.